The chain runs to 939 residues: MQKVRVHEIALELGIKSKEIIDKAKDLDLDLKTASSALPQEEAAELVNYILTGKSSRLKPAAPAAPMPKEEEISPAPQEESQMEPKEEPQKEVKESVKEAPESLPESPKEEAFEAEIPKESVKVTPKTLEQEPPKEELVSIEPSLESASETLSDSNPLPQEKTETKETIVATTLATQTDAEIQESEEKKETLAQATVQKRVGLRIVKKRSEEPAPKADRPSLEEARTPSRTAGLKTLQSLLGESDESEAALARKKKKEKKKPLPAPTKKNEQKIDLLGDRALETVSSFDDEQEEIVLFDLTIRDDINKEDEVAKKVDTDRIKVQRKTPFLDQGIRRVKRRKRRPQTVADKESISGTIEIPEEIRAYEFAEKTGKSIGEVIKVLFNLGLMITKNDFLDRDSIEILAEELELDVVIKNTSEALEYTSEEEEDEDEEGLEERPPVVTIMGHVDHGKTSLLDKIRNTKVAAGEAGGITQHIGAYTVEKDGKKISFIDTPGHEAFTEMRARGAEVTDIVIIVIAADDGVKQQTIEALNHAKAANVPIIIALNKVDKPDANPDKVKAEAADLGYSPLEWGGEYEFVHISAKTGEGIDHLLETILVQSELLELKANPEKAAKAVVIESSLEKGKGPVATVIVQSGTLKVGDSIVADTAYGRVRALIDDCGKNIQSIGPSEVAVVTGLSETPMAGAVLVSVENDSIAREYAEKRALYLRQKELSRSTKVSFDELSAMVAEGQLKSLPVIIKADTQGSLEAIRGSLEKLRNEEVKINIIHAGVGGITESDVVLAGASDNSVILGFNVRPTGSVKNRAKELGVEVKTYSIIYALLDDVRAVLGGMMSPVLEEENTGQAEVRETFTIAKVGTIAGCLVTDGSIQRGIKVRLIRNGVVVFTGNIASLKRFKDDAREVSKGYECGIMLEGFNDVQVGDVFETYKEVEKARKL.

A disordered region spans residues 57–274 (RLKPAAPAAP…APTKKNEQKI (218 aa)). Composition is skewed to basic and acidic residues over residues 83–122 (MEPK…KESV) and 129–138 (LEQEPPKEEL). Composition is skewed to polar residues over residues 146–158 (ESAS…SNPL) and 170–180 (VATTLATQTDA). Residues 208–227 (KRSEEPAPKADRPSLEEART) show a composition bias toward basic and acidic residues. The segment covering 252 to 262 (ARKKKKEKKKP) has biased composition (basic residues). A tr-type G domain is found at 438–607 (ERPPVVTIMG…LVQSELLELK (170 aa)). Residues 447–454 (GHVDHGKT) form a G1 region. Residue 447-454 (GHVDHGKT) participates in GTP binding. The interval 472–476 (GITQH) is G2. The tract at residues 493–496 (DTPG) is G3. Residues 493 to 497 (DTPGH) and 547 to 550 (NKVD) each bind GTP. Residues 547–550 (NKVD) form a G4 region. The tract at residues 583-585 (SAK) is G5.

The protein belongs to the TRAFAC class translation factor GTPase superfamily. Classic translation factor GTPase family. IF-2 subfamily.

It is found in the cytoplasm. Functionally, one of the essential components for the initiation of protein synthesis. Protects formylmethionyl-tRNA from spontaneous hydrolysis and promotes its binding to the 30S ribosomal subunits. Also involved in the hydrolysis of GTP during the formation of the 70S ribosomal complex. In Wolinella succinogenes (strain ATCC 29543 / DSM 1740 / CCUG 13145 / JCM 31913 / LMG 7466 / NCTC 11488 / FDC 602W) (Vibrio succinogenes), this protein is Translation initiation factor IF-2.